Consider the following 2316-residue polypeptide: Receptor-type tyrosine-protein phosphatase zeta (2316 aa).

The N-terminal stretch at 1–24 is a signal peptide; it reads MRILQSFLACVQLLCVCRLDWAYG. Residues 25-1637 are Extracellular-facing; sequence YYRQQRKLVE…LAEGLESEKK (1613 aa). Residues 36–300 form the Alpha-carbonic anhydrase domain; that stretch reads IGWSYTGALN…KFSRQVFSSY (265 aa). 2 disulfides stabilise this stretch: C56–C240 and C133–C264. 7 N-linked (GlcNAc...) asparagine glycosylation sites follow: N105, N134, N223, N232, N324, N381, and N497. Residues 314–413 enclose the Fibronectin type-III domain; that stretch reads EPENVQADPE…LIVDMPTEDA (100 aa). 2 disordered regions span residues 433–499 and 518–537; these read YGKG…LNTS and LPSQIGTNLPPHSVEGTSAS. N-linked (GlcNAc...) asparagine glycosylation is present at N552. S572 and S576 each carry phosphoserine. Disordered regions lie at residues 586 to 624 and 636 to 720; these read KLDSGADDSSGSSPASSTVPFSTDNLSHGYTSSSDTPEA and RNAL…EMPH. Positions 592-602 are enriched in low complexity; sequence DDSSGSSPASS. O-linked (Xyl...) (chondroitin sulfate) serine glycosylation occurs at S595. A compositionally biased stretch (polar residues) spans 603-621; it reads TVPFSTDNLSHGYTSSSDT. A glycan (N-linked (GlcNAc...) asparagine) is linked at N610. S645 is modified (phosphoserine; alternate). S645 carries O-linked (Xyl...) (chondroitin sulfate) serine; alternate glycosylation. S647 carries the post-translational modification Phosphoserine. Polar residues predominate over residues 666–675; sequence TDLTTQSETG. N-linked (GlcNAc...) asparagine glycosylation is present at N685. A compositionally biased stretch (polar residues) spans 699–711; sequence ETFSPDATASRGP. N786 carries an N-linked (GlcNAc...) asparagine glycan. The O-linked (Xyl...) (chondroitin sulfate) serine glycan is linked to S1005. N-linked (GlcNAc...) asparagine glycans are attached at residues N1025 and N1058. 4 disordered regions span residues 1141–1172, 1204–1228, 1401–1521, and 1545–1622; these read QASGDTWLKPGLSTNSEPALSDTASSEVSHPS, KTALPSGPRDPVLTETPMVEQSSSS, LLPS…DGRE, and TSDE…NSSH. A compositionally biased stretch (polar residues) spans 1152–1172; that stretch reads LSTNSEPALSDTASSEVSHPS. A compositionally biased stretch (polar residues) spans 1401–1413; that stretch reads LLPSKATSKPTHS. Positions 1425-1439 are enriched in acidic residues; that stretch reads EDGDDYDDDDYDDID. N1463 is a glycosylation site (N-linked (GlcNAc...) asparagine). Residues 1464–1478 show a composition bias toward polar residues; the sequence is DSDTQESSLVDQSDP. 2 O-linked (Xyl...) (chondroitin sulfate) serine glycosylation sites follow: S1550 and S1552. Composition is skewed to polar residues over residues 1555 to 1569 and 1595 to 1609; these read GTSDSLNDNETSTDF and PRSSTPSVTSGHSGV. N-linked (GlcNAc...) asparagine glycosylation is present at N1563. Residues 1610-1621 show a composition bias toward low complexity; it reads SNSSEAEASNSS. N-linked (GlcNAc...) asparagine glycosylation is found at N1611 and N1619. The helical transmembrane segment at 1638–1663 threads the bilayer; the sequence is AVIPLVIVSALTFICLVVLVGILIYW. At 1664–2316 the chain is on the cytoplasmic side; that stretch reads RKCFQTAHFY…NIAESLESLV (653 aa). 2 positions are modified to phosphothreonine: T1685 and T1688. 2 Tyrosine-protein phosphatase domains span residues 1718 to 1993 and 2024 to 2283; these read FTEE…LVEA and LEKQ…VLSL. Residues D1902, 1934-1940, and Q1978 each bind substrate; that span reads CSAGVGR. C1934 acts as the Phosphocysteine intermediate in catalysis. Phosphoserine is present on S2056.

The protein belongs to the protein-tyrosine phosphatase family. Receptor class 5 subfamily. As to quaternary structure, interacts with tenascin. Interacts with N-CAM and NG-CAM. The carbonic-anhydrase like domain interacts with CNTN1 (contactin). Interacts with PTN. Interaction with PTN promotes formation of homooligomers; oligomerization impairs phosphatase activity. Interacts (via chondroitin sulfate chains) with MDK (via C-terminal); this interaction is inhibited by PTN; this interaction promotes neuronal migration. As to expression, nervous tissue specific.

It localises to the cell membrane. The protein localises to the secreted. The catalysed reaction is O-phospho-L-tyrosyl-[protein] + H2O = L-tyrosyl-[protein] + phosphate. Its function is as follows. Protein tyrosine phosphatase that negatively regulates oligodendrocyte precursor proliferation in the embryonic spinal cord. Required for normal differentiation of the precursor cells into mature, fully myelinating oligodendrocytes. May play a role in protecting oligondendrocytes against apoptosis. May play a role in the establishment of contextual memory, probably via the dephosphorylation of proteins that are part of important signaling cascades. Functionally, isoform 3 (phosphacan), previously designated 3F8 chondroitin sulfate proteoglycan or 3H1 keratan sulfate proteoglycan depending on the glycosylation status, is a soluble nervous tissue-specific proteoglycan. It is synthesized by glia and binds to neurons and to the neural cell adhesion molecules tenascin, N-CAM or NG-CAM but not to laminin and fibronectin. Phosphacan acts as a potent inhibitor of cell adhesion and neurite outgrowth. The sequence is that of Receptor-type tyrosine-protein phosphatase zeta (Ptprz1) from Rattus norvegicus (Rat).